A 378-amino-acid chain; its full sequence is tRNA-specific 2-thiouridylase MnmA (378 aa).

ATP-binding positions include 7–14 (GLSGGVDS) and methionine 33. The segment at 102–104 (NPD) is interaction with target base in tRNA. Residue cysteine 107 is the Nucleophile of the active site. A disulfide bridge connects residues cysteine 107 and cysteine 209. Residue glycine 132 coordinates ATP. The interaction with tRNA stretch occupies residues 159-161 (KDQ). The active-site Cysteine persulfide intermediate is cysteine 209. Residues 316-317 (RY) are interaction with tRNA.

It belongs to the MnmA/TRMU family.

It localises to the cytoplasm. It carries out the reaction S-sulfanyl-L-cysteinyl-[protein] + uridine(34) in tRNA + AH2 + ATP = 2-thiouridine(34) in tRNA + L-cysteinyl-[protein] + A + AMP + diphosphate + H(+). In terms of biological role, catalyzes the 2-thiolation of uridine at the wobble position (U34) of tRNA, leading to the formation of s(2)U34. The protein is tRNA-specific 2-thiouridylase MnmA of Onion yellows phytoplasma (strain OY-M).